A 425-amino-acid polypeptide reads, in one-letter code: Serine--tRNA ligase (425 aa).

Residue 231-233 participates in L-serine binding; the sequence is TAE. 262-264 is an ATP binding site; it reads RSE. Glu-285 is an L-serine binding site. 349-352 lines the ATP pocket; the sequence is EISS. Ser-385 is a binding site for L-serine.

It belongs to the class-II aminoacyl-tRNA synthetase family. Type-1 seryl-tRNA synthetase subfamily. Homodimer. The tRNA molecule binds across the dimer.

It localises to the cytoplasm. It catalyses the reaction tRNA(Ser) + L-serine + ATP = L-seryl-tRNA(Ser) + AMP + diphosphate + H(+). The enzyme catalyses tRNA(Sec) + L-serine + ATP = L-seryl-tRNA(Sec) + AMP + diphosphate + H(+). It functions in the pathway aminoacyl-tRNA biosynthesis; selenocysteinyl-tRNA(Sec) biosynthesis; L-seryl-tRNA(Sec) from L-serine and tRNA(Sec): step 1/1. Its function is as follows. Catalyzes the attachment of serine to tRNA(Ser). Is also able to aminoacylate tRNA(Sec) with serine, to form the misacylated tRNA L-seryl-tRNA(Sec), which will be further converted into selenocysteinyl-tRNA(Sec). This chain is Serine--tRNA ligase, found in Alkaliphilus oremlandii (strain OhILAs) (Clostridium oremlandii (strain OhILAs)).